Reading from the N-terminus, the 207-residue chain is Small heat shock protein hspG7 (207 aa).

One can recognise a sHSP domain in the interval 30–207 (KTIIDILPPM…YSNTIKININ (178 aa)). Composition is skewed to low complexity over residues 84–101 (QQQQ…SSST) and 122–135 (STTS…ATTT). Residues 84–149 (QQQQLVIEKS…EDENKTKSSD (66 aa)) form a disordered region. Residues 136 to 149 (KENKEDENKTKSSD) show a composition bias toward basic and acidic residues.

This sequence belongs to the small heat shock protein (HSP20) family.

The protein is Small heat shock protein hspG7 (hspG7) of Dictyostelium discoideum (Social amoeba).